The primary structure comprises 332 residues: Glycerol-3-phosphate dehydrogenase [NAD(P)+] (332 aa).

Positions 11, 30, and 108 each coordinate NADPH. Residues Lys108, Gly137, and Ser139 each contribute to the sn-glycerol 3-phosphate site. Ala141 is an NADPH binding site. Residues Lys192, Asp245, Ser255, Arg256, and Asn257 each coordinate sn-glycerol 3-phosphate. Residue Lys192 is the Proton acceptor of the active site. NADPH is bound at residue Arg256. NADPH is bound by residues Val280 and Glu282.

This sequence belongs to the NAD-dependent glycerol-3-phosphate dehydrogenase family.

The protein localises to the cytoplasm. The enzyme catalyses sn-glycerol 3-phosphate + NAD(+) = dihydroxyacetone phosphate + NADH + H(+). The catalysed reaction is sn-glycerol 3-phosphate + NADP(+) = dihydroxyacetone phosphate + NADPH + H(+). The protein operates within membrane lipid metabolism; glycerophospholipid metabolism. Functionally, catalyzes the reduction of the glycolytic intermediate dihydroxyacetone phosphate (DHAP) to sn-glycerol 3-phosphate (G3P), the key precursor for phospholipid synthesis. In Burkholderia thailandensis (strain ATCC 700388 / DSM 13276 / CCUG 48851 / CIP 106301 / E264), this protein is Glycerol-3-phosphate dehydrogenase [NAD(P)+].